Consider the following 261-residue polypeptide: Cobalt transport protein CbiM (261 aa).

The N-terminal stretch at 1 to 33 (MLRRVLASKRASLILMGMLSFYIIVSASAPAYA) is a signal peptide. A run of 7 helical transmembrane segments spans residues 41–61 (LPAG…LLGV), 76–96 (LLLA…LPSV), 108–128 (LGSV…VLLF), 140–160 (TLGA…YWIY), 172–192 (IAIF…TSVQ), 197–217 (FPAP…IFAI), and 220–240 (IPLA…LQSY).

Belongs to the CbiM family. Forms an energy-coupling factor (ECF) transporter complex composed of an ATP-binding protein (A component, CbiO), a transmembrane protein (T component, CbiQ) and 2 possible substrate-capture proteins (S components, CbiM and CbiN) of unknown stoichimetry.

The protein localises to the cell inner membrane. The protein operates within cofactor biosynthesis; adenosylcobalamin biosynthesis. Functionally, part of the energy-coupling factor (ECF) transporter complex CbiMNOQ involved in cobalt import. The protein is Cobalt transport protein CbiM of Nostoc sp. (strain PCC 7120 / SAG 25.82 / UTEX 2576).